The primary structure comprises 899 residues: Ewing's tumor-associated antigen 1 homolog (899 aa).

The tract at residues 1-82 (MSRRRKHGDS…TEERYETPKR (82 aa)) is disordered. The span at 71-81 (SNTEERYETPK) shows a compositional bias: basic and acidic residues. The ATR-activation domain (AAD) signature appears at 105 to 111 (IFWDQNS). A coiled-coil region spans residues 180–210 (TKLKSQNQEEELMKLAKQFDKNMEELDVIQE). Glycyl lysine isopeptide (Lys-Gly) (interchain with G-Cter in SUMO2) cross-links involve residues lysine 416 and lysine 444. At serine 467 the chain carries Phosphoserine. Residues lysine 485 and lysine 539 each participate in a glycyl lysine isopeptide (Lys-Gly) (interchain with G-Cter in SUMO2) cross-link. Residues 607 to 622 (DDVDDDILYQACDDIE) carry the RBM1 motif motif. Serine 810 carries the phosphoserine modification. The segment at 833–899 (NKTVNPLPGK…AQASSVKKGR (67 aa)) is disordered. Basic and acidic residues predominate over residues 859–877 (PSKEEEEKNRKCSPEEIQR). Residues 868 to 890 (RKCSPEEIQRKRQAALIRRMAKA) carry the RBM2 motif motif.

As to quaternary structure, interacts (via RBM1 motif) with RPA1. Interacts (via RBM2 motif) with RPA2. Interacts (via the ATR-activation domain motif) with ATR. In terms of processing, phosphorylated by ATR.

The protein localises to the nucleus. Functionally, replication stress response protein that accumulates at DNA damage sites and promotes replication fork progression and integrity. Recruited to stalled replication forks via interaction with the RPA complex and directly stimulates ATR kinase activity independently of TOPBP1. Probably only regulates a subset of ATR targets. In Bos taurus (Bovine), this protein is Ewing's tumor-associated antigen 1 homolog.